The chain runs to 360 residues: Aminomethyltransferase (360 aa).

Belongs to the GcvT family. The glycine cleavage system is composed of four proteins: P, T, L and H.

It catalyses the reaction N(6)-[(R)-S(8)-aminomethyldihydrolipoyl]-L-lysyl-[protein] + (6S)-5,6,7,8-tetrahydrofolate = N(6)-[(R)-dihydrolipoyl]-L-lysyl-[protein] + (6R)-5,10-methylene-5,6,7,8-tetrahydrofolate + NH4(+). The glycine cleavage system catalyzes the degradation of glycine. The protein is Aminomethyltransferase of Exiguobacterium sibiricum (strain DSM 17290 / CCUG 55495 / CIP 109462 / JCM 13490 / 255-15).